Here is a 178-residue protein sequence, read N- to C-terminus: Leukemia NUP98 fusion partner 1 (178 aa).

Disordered regions lie at residues 28 to 55, 89 to 108, and 147 to 178; these read EDQRGLRERHRLQATSHRKTSLPCPLPV, SEDGSFKEPLESKGRSHSKI, and IKSRKKVEEERSSRKEEHGEAHMAPLFEKGPE. Basic residues predominate over residues 34-47; it reads RERHRLQATSHRKT. Positions 147-167 are enriched in basic and acidic residues; that stretch reads IKSRKKVEEERSSRKEEHGEA.

This Homo sapiens (Human) protein is Leukemia NUP98 fusion partner 1 (LNP1).